Here is a 249-residue protein sequence, read N- to C-terminus: 5-oxoprolinase subunit A (249 aa).

It belongs to the LamB/PxpA family. As to quaternary structure, forms a complex composed of PxpA, PxpB and PxpC.

It catalyses the reaction 5-oxo-L-proline + ATP + 2 H2O = L-glutamate + ADP + phosphate + H(+). Catalyzes the cleavage of 5-oxoproline to form L-glutamate coupled to the hydrolysis of ATP to ADP and inorganic phosphate. The polypeptide is 5-oxoprolinase subunit A (Limosilactobacillus fermentum (strain NBRC 3956 / LMG 18251) (Lactobacillus fermentum)).